We begin with the raw amino-acid sequence, 846 residues long: MLFTVSCSKMSSIVDRDDSSIFDGLVEEDDKDKAKRVSRNKSEKKRRDQFNVLIKELGSMLPGNARKMDKSTVLQKSIDFLRKHKEITAQSDASEIRQDWKPTFLSNEEFTQLMLEALDGFFLAIMTDGSIIYVSESVTSLLEHLPSDLVDQSIFNFIPEGEHSEVYKILSTHLLESDSLTPEYLKSKNQLEFCCHMLRGTIDPKEPSTYEYVKFIGNFKSLNSVSSSAHNGFEGTIQRTHRPSYEDRVCFVATVRLATPQFIKEMCTVEEPNEEFASRHSLEWKFLFLDHRAPPIIGYLPFEVLGTSGYDYYHVDDLENLAKCHEHLMQYGKGKSCYYRFLTKGQQWIWLQTHYYITYHQWNSRPEFIVCTHTVVSYAEVRAERRRELSIEESLPEIAADKSQDSGSDNRINTVSLKEALERFDHSPTPSASSRSSRKSSHTAVSDPSSTPTKIPTDTSTPPRQHLPAHEKMVQRRSSFSSQSINSQSVGSSLTQPVMSQATNLPIPQGMSQFQFSAQLGAMQHLKDQLEQRTRMIEANIHRQQEELRKIQEQLQMVHGQGLQMFLQQPNPGLNFGSVQLSSGNSSNIQQLAPINMQGQVVPTNQIQSGMNTGHIGTTQHMIQQQTLQSTSTQSQQNVLSGHSQQTSLPSQTQSTLTAPLYNTMVISQPAAGSMVQIPSSMPQNSTQSAAVTTFTQDRQIRFSQGQQLVTKLVTAPVACGAVMVPSTMLMGQVVTAYPTFATQQQQSQTLSVTQQRQQQSSQEQQLTSVQQPSQAQLTQPPQQFLQTSRLLHGNPSTQLILSAAFPLQQSTFPQSHHQQHQSQQQQQLSRHRTDSLPDPSKVQPQ.

The Nuclear localization signal signature appears at 32 to 47 (DKAKRVSRNKSEKKRR). The bHLH domain occupies 34-84 (AKRVSRNKSEKKRRDQFNVLIKELGSMLPGNARKMDKSTVLQKSIDFLRKH). A phosphoserine mark is found at Ser38 and Ser42. A Glycyl lysine isopeptide (Lys-Gly) (interchain with G-Cter in SUMO); alternate cross-link involves residue Lys67. Lys67 is covalently cross-linked (Glycyl lysine isopeptide (Lys-Gly) (interchain with G-Cter in SUMO1); alternate). PAS domains are found at residues 107 to 177 (NEEF…LLES) and 262 to 332 (FIKE…MQYG). In terms of domain architecture, PAC spans 336–379 (SCYYRFLTKGQQWIWLQTHYYITYHQWNSRPEFIVCTHTVVSYA). The interaction with NR3C1 stretch occupies residues 371–845 (CTHTVVSYAE…SLPDPSKVQP (475 aa)). A Phosphoserine modification is found at Ser408. Residues 420-495 (ALERFDHSPT…NSQSVGSSLT (76 aa)) are disordered. Position 427 is a phosphoserine; by GSK3-beta (Ser427). Ser431 is modified (phosphoserine). The segment covering 447 to 463 (DPSSTPTKIPTDTSTPP) has biased composition (polar residues). The interaction with SIRT1 stretch occupies residues 450–570 (STPTKIPTDT…QGLQMFLQQP (121 aa)). 2 positions are modified to phosphothreonine; by CDK5: Thr451 and Thr461. The span at 478–493 (SSFSSQSINSQSVGSS) shows a compositional bias: low complexity. An implicated in the circadian rhythmicity region spans residues 514-564 (FQFSAQLGAMQHLKDQLEQRTRMIEANIHRQQEELRKIQEQLQMVHGQGLQ). Low complexity-rich tracts occupy residues 624 to 637 (QQQT…QSQQ) and 644 to 654 (SQQTSLPSQTQ). Disordered regions lie at residues 624–654 (QQQT…SQTQ), 764–783 (EQQL…QPPQ), and 811–846 (STFP…VQPQ). Residues 811 to 829 (STFPQSHHQQHQSQQQQQL) are compositionally biased toward low complexity. A Glycyl lysine isopeptide (Lys-Gly) (interchain with G-Cter in SUMO1) cross-link involves residue Lys842.

Component of the circadian clock oscillator which includes the CRY proteins, CLOCK or NPAS2, BMAL1 or BMAL2, CSNK1D and/or CSNK1E, TIMELESS and the PER proteins. Forms a heterodimer with BMAL1. The CLOCK-BMAL1 heterodimer is required for E-box-dependent transactivation, for CLOCK nuclear translocation and degradation, and for phosphorylation of both CLOCK and BMAL1. Interacts with NR3C1 in a ligand-dependent fashion. Interacts with ESR1 and estrogen stimulates this interaction. Interacts with the complex p35/CDK5. Interacts with RELA/p65. Interacts with KAT2B, CREBBP and EP300. Interacts with ID1 and ID3. Interacts with ID2. Interacts with MTA1. Interacts with OGA. Interacts with SIRT1. Interacts with CIPC. Interacts with EZH2. Interacts with EIF4E, PIWIL1 and DDX4. Interacts with PER1, PER2, CRY1 and CRY2 and this interaction requires a translocation to the nucleus. Interaction of the CLOCK-BMAL1 heterodimer with PER or CRY inhibits transcription activation. Interaction of the CLOCK-BMAL1 with CRY1 is independent of DNA but with PER2 is off DNA. The CLOCK-BMAL1 heterodimer interacts with GSK3B. Interacts with KDM5A. Interacts with KMT2A; in a circadian manner. Interacts with MYBBP1A. Interacts with THRAP3. Interacts with MED1; this interaction requires the presence of THRAP3. Interacts with NCOA2. The CLOCK-BMAL1 heterodimer interacts with PASD1. Interacts with ASS1 and IMPDH2; in a circadian manner. Interacts with NDUFA9. Interacts with PIWIL2 (via PIWI domain). Interacts with HNF4A. Post-translationally, ubiquitinated, leading to its proteasomal degradation. O-glycosylated; contains O-GlcNAc. O-glycosylation by OGT prevents protein degradation by inhibiting ubiquitination. It also stabilizes the CLOCK-BMAL1 heterodimer thereby increasing CLOCK-BMAL1-mediated transcriptional activation of PER1/2/3 and CRY1/2. In terms of processing, phosphorylation is dependent on the CLOCK-BMAL1 heterodimer formation. Phosphorylation enhances the transcriptional activity, alters the subcellular localization and decreases the stability of the heterodimer by promoting its degradation. Phosphorylation shows circadian variations in the liver. May be phosphorylated by CSNK1D and CKSN1E. Post-translationally, sumoylation enhances its transcriptional activity and interaction with ESR1, resulting in up-regulation of ESR1 activity. Estrogen stimulates sumoylation. Desumoylation by SENP1 negatively regulates its transcriptional activity. Undergoes lysosome-mediated degradation in a time-dependent manner in the liver.

The protein resides in the cytoplasm. The protein localises to the nucleus. It is found in the cytosol. The enzyme catalyses L-lysyl-[protein] + acetyl-CoA = N(6)-acetyl-L-lysyl-[protein] + CoA + H(+). Transcriptional activator which forms a core component of the circadian clock. The circadian clock, an internal time-keeping system, regulates various physiological processes through the generation of approximately 24 hour circadian rhythms in gene expression, which are translated into rhythms in metabolism and behavior. It is derived from the Latin roots 'circa' (about) and 'diem' (day) and acts as an important regulator of a wide array of physiological functions including metabolism, sleep, body temperature, blood pressure, endocrine, immune, cardiovascular, and renal function. Consists of two major components: the central clock, residing in the suprachiasmatic nucleus (SCN) of the brain, and the peripheral clocks that are present in nearly every tissue and organ system. Both the central and peripheral clocks can be reset by environmental cues, also known as Zeitgebers (German for 'timegivers'). The predominant Zeitgeber for the central clock is light, which is sensed by retina and signals directly to the SCN. The central clock entrains the peripheral clocks through neuronal and hormonal signals, body temperature and feeding-related cues, aligning all clocks with the external light/dark cycle. Circadian rhythms allow an organism to achieve temporal homeostasis with its environment at the molecular level by regulating gene expression to create a peak of protein expression once every 24 hours to control when a particular physiological process is most active with respect to the solar day. Transcription and translation of core clock components (CLOCK, NPAS2, BMAL1, BMAL2, PER1, PER2, PER3, CRY1 and CRY2) plays a critical role in rhythm generation, whereas delays imposed by post-translational modifications (PTMs) are important for determining the period (tau) of the rhythms (tau refers to the period of a rhythm and is the length, in time, of one complete cycle). A diurnal rhythm is synchronized with the day/night cycle, while the ultradian and infradian rhythms have a period shorter and longer than 24 hours, respectively. Disruptions in the circadian rhythms contribute to the pathology of cardiovascular diseases, cancer, metabolic syndromes and aging. A transcription/translation feedback loop (TTFL) forms the core of the molecular circadian clock mechanism. Transcription factors, CLOCK or NPAS2 and BMAL1 or BMAL2, form the positive limb of the feedback loop, act in the form of a heterodimer and activate the transcription of core clock genes and clock-controlled genes (involved in key metabolic processes), harboring E-box elements (5'-CACGTG-3') within their promoters. The core clock genes: PER1/2/3 and CRY1/2 which are transcriptional repressors form the negative limb of the feedback loop and interact with the CLOCK|NPAS2-BMAL1|BMAL2 heterodimer inhibiting its activity and thereby negatively regulating their own expression. This heterodimer also activates nuclear receptors NR1D1/2 and RORA/B/G, which form a second feedback loop and which activate and repress BMAL1 transcription, respectively. Regulates the circadian expression of ICAM1, VCAM1, CCL2, THPO and MPL and also acts as an enhancer of the transactivation potential of NF-kappaB. Plays an important role in the homeostatic regulation of sleep. The CLOCK-BMAL1 heterodimer regulates the circadian expression of SERPINE1/PAI1, VWF, B3, CCRN4L/NOC, NAMPT, DBP, MYOD1, PPARGC1A, PPARGC1B, SIRT1, GYS2, F7, NGFR, GNRHR, BHLHE40/DEC1, ATF4, MTA1, KLF10 and also genes implicated in glucose and lipid metabolism. Promotes rhythmic chromatin opening, regulating the DNA accessibility of other transcription factors. The CLOCK-BMAL2 heterodimer activates the transcription of SERPINE1/PAI1 and BHLHE40/DEC1. The preferred binding motif for the CLOCK-BMAL1 heterodimer is 5'-CACGTGA-3', which contains a flanking adenine nucleotide at the 3-prime end of the canonical 6-nucleotide E-box sequence. CLOCK specifically binds to the half-site 5'-CAC-3', while BMAL1 binds to the half-site 5'-GTGA-3'. The CLOCK-BMAL1 heterodimer also recognizes the non-canonical E-box motifs 5'-AACGTGA-3' and 5'-CATGTGA-3'. CLOCK has an intrinsic acetyltransferase activity, which enables circadian chromatin remodeling by acetylating histones and nonhistone proteins, including its own partner BMAL1. Represses glucocorticoid receptor NR3C1/GR-induced transcriptional activity by reducing the association of NR3C1/GR to glucocorticoid response elements (GREs) via the acetylation of multiple lysine residues located in its hinge region. The acetyltransferase activity of CLOCK is as important as its transcription activity in circadian control. Acetylates metabolic enzymes IMPDH2 and NDUFA9 in a circadian manner. Facilitated by BMAL1, rhythmically interacts and acetylates argininosuccinate synthase 1 (ASS1) leading to enzymatic inhibition of ASS1 as well as the circadian oscillation of arginine biosynthesis and subsequent ureagenesis. Drives the circadian rhythm of blood pressure through transcriptional activation of ATP1B1. The chain is Circadian locomoter output cycles protein kaput (CLOCK) from Pongo abelii (Sumatran orangutan).